Here is a 287-residue protein sequence, read N- to C-terminus: uncharacterized protein (287 aa).

This sequence belongs to the A.longa ORF167/ORF288 family.

It is found in the plastid. This is an uncharacterized protein from Euglena longa (Euglenophycean alga).